Consider the following 813-residue polypeptide: Leucine--tRNA ligase (813 aa).

The 'HIGH' region signature appears at serine 40–histidine 51. Positions lysine 572–serine 576 match the 'KMSKS' region motif. Lysine 575 contributes to the ATP binding site.

It belongs to the class-I aminoacyl-tRNA synthetase family.

The protein resides in the cytoplasm. The catalysed reaction is tRNA(Leu) + L-leucine + ATP = L-leucyl-tRNA(Leu) + AMP + diphosphate. The polypeptide is Leucine--tRNA ligase (Clostridium botulinum (strain Langeland / NCTC 10281 / Type F)).